The sequence spans 352 residues: C-C chemokine receptor type 5 (352 aa).

Residues 1-30 are Extracellular-facing; it reads MDYQVSSPTYDIDYDTSEPCQKINVKQIAA. Tyr3 carries the post-translational modification Sulfotyrosine. O-linked (GalNAc...) serine glycans are attached at residues Ser6 and Ser7. Sulfotyrosine occurs at positions 10 and 14. 2 disulfides stabilise this stretch: Cys20-Cys269 and Cys101-Cys178. Residues 31 to 58 form a helical membrane-spanning segment; sequence RLLPPLYSLVFIFGFVGNMLVILVLINC. Residues 59–68 are Cytoplasmic-facing; it reads KRLKSMTDIY. Residues 69 to 89 traverse the membrane as a helical segment; sequence LLNLAISDLFFLLTVPFWAHY. Over 90–102 the chain is Extracellular; that stretch reads AAAQWDFGNTMCQ. The helical transmembrane segment at 103 to 124 threads the bilayer; the sequence is LLTGLYFIGFFSGIFFIILLTI. Residues 125–141 are Cytoplasmic-facing; it reads DRYLAIVHAVFALKART. Residues 142–166 form a helical membrane-spanning segment; it reads VTFGVVTSVITWVVAVFASLPGIIF. The Extracellular segment spans residues 167–198; that stretch reads TRSQKEGLHYTCSSHFPYSQYQFWKNFQTLKI. The chain crosses the membrane as a helical span at residues 199-218; the sequence is VILGLVLPLLVMVICYSGIL. At 219–235 the chain is on the cytoplasmic side; the sequence is KTLLRCRNEKKRHRAVR. A helical transmembrane segment spans residues 236–260; sequence LIFTIMIVYFLFWAPYNIVLLLNTF. The Extracellular segment spans residues 261–277; sequence QEFFGLNNCSSSNRLDQ. A helical transmembrane segment spans residues 278 to 301; it reads AMQVTETLGMTHCCINPIIYAFVG. The Cytoplasmic portion of the chain corresponds to 302 to 352; it reads EKFRNYLLVFFQKHIAKHFCKCCSIFQQEAPERASSVYTRSTGEQEISVGL. S-palmitoyl cysteine attachment occurs at residues Cys321, Cys323, and Cys324. Phosphoserine; by BARK1 occurs at positions 336, 337, 342, and 349.

It belongs to the G-protein coupled receptor 1 family. Interacts with PRAF2. Efficient ligand binding to CCL3/MIP-1alpha and CCL4/MIP-1beta requires sulfation, O-glycosylation and sialic acid modifications. Glycosylation on Ser-6 is required for efficient binding of CCL4. Interacts with GRK2. Interacts with ARRB1 and ARRB2. Interacts with CNIH4. Interacts with S100A4; this interaction stimulates T-lymphocyte chemotaxis. In terms of processing, sulfated on at least 2 of the N-terminal tyrosines. Sulfation is required for efficient binding of the chemokines, CCL3 and CCL4. Post-translationally, palmitoylation in the C-terminal is important for cell surface expression. Phosphorylation on serine residues in the C-terminal is stimulated by binding CC chemokines especially by APO-RANTES. In terms of processing, O-glycosylated, but not N-glycosylated. Ser-6 appears to be the major site even if Ser-7 may be also O-glycosylated. Also sialylated glycans present which contribute to chemokine binding. Thr-16 and Ser-17 may also be glycosylated and, if so, with small moieties such as a T-antigen.

The protein localises to the cell membrane. Receptor for a number of inflammatory CC-chemokines including CCL3/MIP-1-alpha, CCL4/MIP-1-beta and RANTES and subsequently transduces a signal by increasing the intracellular calcium ion level. May play a role in the control of granulocytic lineage proliferation or differentiation. Participates in T-lymphocyte migration to the infection site by acting as a chemotactic receptor. The polypeptide is C-C chemokine receptor type 5 (CCR5) (Nomascus leucogenys (Northern white-cheeked gibbon)).